An 87-amino-acid polypeptide reads, in one-letter code: U3-theraphotoxin-Hhn1d (87 aa).

Positions 1 to 24 (MVNMKASMFLTFAGLVLLFVVCYA) are cleaved as a signal peptide. Residues 25–52 (SESEEKEFPKEMLSSIFAVDNDFKQEER) constitute a propeptide that is removed on maturation. 3 disulfides stabilise this stretch: C54–C67, C61–C72, and C66–C79.

This sequence belongs to the neurotoxin 10 (Hwtx-1) family. 51 (Hntx-8) subfamily. Hntx-8 sub-subfamily. As to expression, expressed by the venom gland.

It localises to the secreted. Its function is as follows. Ion channel inhibitor. The polypeptide is U3-theraphotoxin-Hhn1d (Cyriopagopus hainanus (Chinese bird spider)).